The following is a 230-amino-acid chain: MMPKHCLLGLLIILLSSATEIQPARVSLTPQKVRFQSRNFHNILHWQAGSSLPSNNSIYFVQYKMYGQSQWEDKVDCWGTTALFCDLTNETLDPYELYYGRVMTACAGRHSAWTRTPRFTPWWETKLDPPVVTITRVNASLRVLLRPPELPNRNQSGKNASMETYYGLVYRVFTINNSLEKEQKAYEGTQRAVEIEGLIPHSSYCVVAEMYQPMFDRRSPRSKERCVHIP.

The first 20 residues, 1 to 20 (MMPKHCLLGLLIILLSSATE), serve as a signal peptide directing secretion. 2 consecutive Fibronectin type-III domains span residues 29 to 128 (TPQK…TKLD) and 129 to 230 (PPVV…VHIP). 2 disulfides stabilise this stretch: cysteine 77–cysteine 85 and cysteine 205–cysteine 226.

It belongs to the type II cytokine receptor family. Highly expressed in lymph nodes and at lower levels in lung, spleen, and thymus. Not expressed in kidney, liver and heart.

The protein resides in the secreted. Receptor for IL22. Binds to IL22, prevents interaction with the functional IL-22R complex and blocks the activity of IL22 (in vitro). May play an important role as an IL22 antagonist in the regulation of inflammatory responses. This chain is Interleukin-22 receptor subunit alpha-2 (Il22ra2), found in Mus musculus (Mouse).